Here is a 443-residue protein sequence, read N- to C-terminus: Tol-Pal system protein TolB (443 aa).

Residues 1–33 (MKIGIINTKIRTVFSAFACMIAASLVCTMPARA) form the signal peptide.

The protein belongs to the TolB family. As to quaternary structure, the Tol-Pal system is composed of five core proteins: the inner membrane proteins TolA, TolQ and TolR, the periplasmic protein TolB and the outer membrane protein Pal. They form a network linking the inner and outer membranes and the peptidoglycan layer.

It localises to the periplasm. Functionally, part of the Tol-Pal system, which plays a role in outer membrane invagination during cell division and is important for maintaining outer membrane integrity. This is Tol-Pal system protein TolB from Brucella suis (strain ATCC 23445 / NCTC 10510).